Reading from the N-terminus, the 568-residue chain is Potassium-transporting ATPase potassium-binding subunit (568 aa).

Transmembrane regions (helical) follow at residues 3–23 (TEIL…YPLG), 64–84 (FLKA…VLLV), 133–153 (FVIM…MAGV), 179–199 (ILLP…TPMG), 255–275 (MVEC…LGFY), 281–301 (LGYS…FINV), 375–395 (FGGV…AVFI), 418–438 (IATF…AISS), 497–517 (IVLI…AGLL), and 535–555 (VTFA…SFFP).

This sequence belongs to the KdpA family. The system is composed of three essential subunits: KdpA, KdpB and KdpC.

It is found in the cell inner membrane. Part of the high-affinity ATP-driven potassium transport (or Kdp) system, which catalyzes the hydrolysis of ATP coupled with the electrogenic transport of potassium into the cytoplasm. This subunit binds the periplasmic potassium ions and delivers the ions to the membrane domain of KdpB through an intramembrane tunnel. The polypeptide is Potassium-transporting ATPase potassium-binding subunit (Bacteroides fragilis (strain ATCC 25285 / DSM 2151 / CCUG 4856 / JCM 11019 / LMG 10263 / NCTC 9343 / Onslow / VPI 2553 / EN-2)).